Reading from the N-terminus, the 132-residue chain is Small ribosomal subunit protein eS17B (132 aa).

Residue S43 is modified to Phosphoserine.

It belongs to the eukaryotic ribosomal protein eS17 family. In terms of assembly, component of the small ribosomal subunit (SSU). Mature yeast ribosomes consist of a small (40S) and a large (60S) subunit. The 40S small subunit contains 1 molecule of ribosomal RNA (18S rRNA) and at least 33 different proteins. The large 60S subunit contains 3 rRNA molecules (25S, 5.8S and 5S rRNA) and at least 46 different proteins.

The protein localises to the cytoplasm. Its function is as follows. Component of the ribosome, a large ribonucleoprotein complex responsible for the synthesis of proteins in the cell. The small ribosomal subunit (SSU) binds messenger RNAs (mRNAs) and translates the encoded message by selecting cognate aminoacyl-transfer RNA (tRNA) molecules. The large subunit (LSU) contains the ribosomal catalytic site termed the peptidyl transferase center (PTC), which catalyzes the formation of peptide bonds, thereby polymerizing the amino acids delivered by tRNAs into a polypeptide chain. The nascent polypeptides leave the ribosome through a tunnel in the LSU and interact with protein factors that function in enzymatic processing, targeting, and the membrane insertion of nascent chains at the exit of the ribosomal tunnel. This Schizosaccharomyces pombe (strain 972 / ATCC 24843) (Fission yeast) protein is Small ribosomal subunit protein eS17B (rps1702).